We begin with the raw amino-acid sequence, 136 residues long: Salivary protein 15 Iric-2 (136 aa).

Residues 1–22 form the signal peptide; it reads MESFVAMKVVCIVLLFVIAAEA. N-linked (GlcNAc...) asparagine glycosylation occurs at N105. Residues 117-136 form a CD4-binding region; it reads GPKNQTCENKDQCVPHIPGC.

This sequence belongs to the salp15 family. Interacts with host CD4. Interacts with host DC-SIGN (CD209). Interacts with Borrelia outer surface protein C (OspC). Expressed in salivary glands. Detected in fed adult female.

It is found in the secreted. Functionally, salivary tick protein that downregulates host immune system by binding to both dendritic cells, and CD4(+) T cells. Specifically binds to the CD4 coreceptor on T cells. This interaction prevents the activation of the Src kinase, Lck, and its downstream substrate Zap-70, and results in deficient activation of PLCgamma1, the repression of calcium fluxes triggered by T-cell antigen receptor (TCR) ligation, and a subsequent reduction in interleukin-2 production. This salivary protein also binds to DC-SIGN (CD209) on dendritic cells (DC) and activates the Raf-1 kinase/MEK signaling pathway that results in down-regulating expression of pro-inflammatory cytokines. Furthermore, it inhibits T cell proliferation induced by DCs. In addition, it inhibits in vitro keratinocyte inflammation induced by Borrelia burgdorferi or by the major outer surface protein (OspC) of Borrelia. In addition, it downregulates chemokines and monocyte chemoattractant protein 1, as well as several antimicrobial peptides such as defensins, cathelicidin, psoriasin, and RNase 7. Apart from its immunomodulatory activities, it is also associated with protection of Borrelia spirochetes from antibody-mediated killing through its binding to OspC. In vivo, tests on different immune disease animal models show promising therapeutic results, e.g., in inhibiting HIV infection, experimental autoimmune encephalomyelitis, transplantation rejection, and asthma. This is Salivary protein 15 Iric-2 from Ixodes ricinus (Common tick).